The primary structure comprises 374 residues: Glutamate 5-kinase (374 aa).

Residue Lys-16 coordinates ATP. The substrate site is built by Ser-56, Asp-143, and Asn-155. Residue 175 to 176 (TD) participates in ATP binding. Residues 282 to 360 (KGCFVVDEGA…TRIEEILGYV (79 aa)) enclose the PUA domain.

The protein belongs to the glutamate 5-kinase family.

It localises to the cytoplasm. The enzyme catalyses L-glutamate + ATP = L-glutamyl 5-phosphate + ADP. It participates in amino-acid biosynthesis; L-proline biosynthesis; L-glutamate 5-semialdehyde from L-glutamate: step 1/2. Catalyzes the transfer of a phosphate group to glutamate to form L-glutamate 5-phosphate. The protein is Glutamate 5-kinase of Methylococcus capsulatus (strain ATCC 33009 / NCIMB 11132 / Bath).